The chain runs to 475 residues: Stromelysin-1 (475 aa).

The signal sequence occupies residues 1–17; the sequence is MKGLPVLLWLCTAVCSS. The propeptide at 18 to 97 is activation peptide; the sequence is YPLHGSEEDA…PRCGVPDVGG (80 aa). A Cysteine switch motif is present at residues 88-95; it reads PRCGVPDV. Zn(2+) is bound at residue Cys-90. Asn-118 is a glycosylation site (N-linked (GlcNAc...) asparagine). Residues Asp-122 and Asp-156 each contribute to the Ca(2+) site. Residues His-166 and Asp-168 each coordinate Zn(2+). The Ca(2+) site is built by Asp-173, Gly-174, Gly-176, and Val-178. Residue His-181 coordinates Zn(2+). Gly-188, Asn-190, and Asp-192 together coordinate Ca(2+). His-194 is a Zn(2+) binding site. Ca(2+) contacts are provided by Asp-196, Asp-197, and Glu-199. Zn(2+) is bound at residue His-216. Glu-217 is a catalytic residue. Residues His-220 and His-226 each coordinate Zn(2+). Hemopexin repeat units lie at residues 285–334, 335–381, 383–431, and 432–475; these read LPMC…WPSL, PSNM…GLPE, VQKI…FPGI, and GTKV…WFNC. A disulfide bridge links Cys-288 with Cys-475. Asp-295 is a Ca(2+) binding site. Residues Asp-387 and Asp-436 each coordinate Ca(2+).

It belongs to the peptidase M10A family. Ca(2+) serves as cofactor. Zn(2+) is required as a cofactor.

It is found in the secreted. The protein resides in the extracellular space. It localises to the extracellular matrix. It carries out the reaction Preferential cleavage where P1', P2' and P3' are hydrophobic residues.. Its activity is regulated as follows. Inhibited by a synthetic peptide corresponding to the inhibitory cysteine switch motif. Inhibited by ethylenediaminetetraacetic acid (EDTA), 1,10-pheanthroline, 2-mecaptoethanol, dithiothreitol and metalloproteinase inhibitor protein TIMP. Functionally, can degrade fibronectin, laminin, gelatins of type I, III, IV, and V; collagens III, IV, X, and IX, and cartilage proteoglycans. Activates procollagenase. Metalloproteinase with a rather broad substrate specificity that can degrade fibronectin, laminin, gelatins of type I, III, IV, and V; collagens III, IV, X, and IX, and cartilage proteoglycans. Activates different molecules including growth factors, plasminogen or other matrix metalloproteinases such as MMP9. Once released into the extracellular matrix (ECM), the inactive pro-enzyme is activated by the plasmin cascade signaling pathway. Also acts intracellularly. For example, in dopaminergic neurons, gets activated by the serine protease HTRA2 upon stress and plays a pivotal role in DA neuronal degeneration by mediating microglial activation and alpha-synuclein/SNCA cleavage. In addition, plays a role in immune response and possesses antiviral activity against various viruses. Mechanistically, translocates from the cytoplasm into the cell nucleus upon virus infection to influence NF-kappa-B activities. This is Stromelysin-1 (Mmp3) from Rattus norvegicus (Rat).